Consider the following 499-residue polypeptide: Endosomal/lysosomal proton channel TMEM175 (499 aa).

The span at 1-10 (MSRLQVQEQA) shows a compositional bias: polar residues. Residues 1–26 (MSRLQVQEQAVDSEGDSSLYRRDEEG) are disordered. Residues 1–30 (MSRLQVQEQAVDSEGDSSLYRRDEEGTQSS) lie on the Cytoplasmic side of the membrane. The chain crosses the membrane as a helical span at residues 31 to 53 (HRMLGFSDALLSIIATVMILPVT). The RxxxFSD motif 1 motif lies at 32–38 (RMLGFSD). Residues 54–74 (HTEISPEQQFDKSIQKLLATR) are Lumenal-facing. Positions 55–60 (TEISPE) are short helix H1-1. A short helix H2-1 region spans residues 62–68 (QFDKSIQ). A helical membrane pass occupies residues 75 to 97 (IAVYLMTFLIVTVAWAAHTRLFQ). The Cytoplasmic segment spans residues 98-103 (VVGKID). Residues 104 to 125 (DTLALLNLACMMTITLLPYTFS) traverse the membrane as a helical segment. Over 126–135 (LMVTFPDVPL) the chain is Lumenal. The chain crosses the membrane as a helical span at residues 136-157 (GIFLFCMCVIAIGSVQAMIVGY). The Cytoplasmic segment spans residues 158–181 (AFHFPHLLNPQIQCSTHRALSRRH). The helical transmembrane segment at 182 to 202 (ILHLVLRGPALCFVAAVFSLF) threads the bilayer. Over 203 to 207 (FFPLS) the chain is Lumenal. Residues 208 to 227 (YLLMVTVIFLPHISKATTWC) traverse the membrane as a helical segment. Over 228–254 (KDKFMGHRESPAHNVEPFSIDLHAPLS) the chain is Cytoplasmic. A helical membrane pass occupies residues 255-279 (KERVEAFSDGVYAIVATLLILDICE). A RxxxFSD motif 2 motif is present at residues 257 to 263 (RVEAFSD). Over 280–306 (DNVPDPKDVQQKFSGSLVAALGAYGPQ) the chain is Lumenal. The segment at 285–293 (PKDVQQKFS) is short helix H1-2. The tract at residues 295–301 (SLVAALG) is short helix H2-2. A helical transmembrane segment spans residues 307-329 (FLAYFGSFATVGLLWFAHHSLFL). Residues 330–335 (HVRKAT) are Cytoplasmic-facing. Residues 336 to 357 (QTMGLFNILSLAFVGGLPLAYQ) traverse the membrane as a helical segment. Topologically, residues 358-372 (QTSAFARQPRDELER) are lumenal. A helical membrane pass occupies residues 373-393 (VRVSCAIIFFASIFQFAIWTT). At 394 to 413 (ALLHQRETLQPAVQFGGQEH) the chain is on the cytoplasmic side. Residues 414–437 (AFMFAKLALYPCASLLAFAATCLL) traverse the membrane as a helical segment. The Lumenal segment spans residues 438-439 (SR). Residues 440 to 466 (FSTAIFHLMQIAVPFAFLLLRLLVRLA) traverse the membrane as a helical segment. The Cytoplasmic portion of the chain corresponds to 467 to 499 (LAGLQVLWDLWPERPQQDQGEPETQSQLLPASC).

The protein belongs to the TMEM175 family. In terms of assembly, homodimer. Interacts with AKT (AKT1, AKT2 or AKT3); leading to formation of the lysoK(GF) complex, which activates the channel. Interacts with LAMP1; inhibiting the proton channel activity of TMEM175. Interacts with LAMP2; inhibiting the proton channel activity of TMEM175.

The protein resides in the endosome membrane. Its subcellular location is the lysosome membrane. It carries out the reaction H(+)(in) = H(+)(out). The enzyme catalyses K(+)(in) = K(+)(out). Active at low pH (under pH 4.6): proton channel activity is activated by luminal side protons. Polyunsaturated fatty acids, such as arachidonic acid, also activate the channel activity. Proton channel activity is directly inhibited by LAMP1 or LAMP2, facilitating lysosomal acidification. Channel activity is activated following interaction with AKT (AKT1, AKT2 or AKT3): interaction promotes activation from closed to an open state. Activation by AKT is independent of AKT serine/threonine-protein kinase activity. Proton-activated proton channel that catalyzes proton efflux from endosomes and lysosomes to maintain a steady-state pH. Activated at low pH (under pH 4.6) by luminal side protons: selectively mediates lysosomal proton release from lysosomes, eliciting a proton leak that balances V-ATPase activity to maintain pH homeostasis. Regulation of lumenal pH stability is required for autophagosome-lysosome fusion. Also acts as a potassium channel at higher pH, regulating potassium conductance in endosomes and lysosomes. Constitutes the pore-forming subunit of the lysoK(GF) complex, a complex activated by extracellular growth factors. The lysoK(GF) complex is composed of TMEM175 and AKT (AKT1, AKT2 or AKT3), a major target of growth factor receptors: in the complex, TMEM175 channel is opened by conformational changes by AKT, leading to its activation. The lysoK(GF) complex is required to protect neurons against stress-induced damage. The chain is Endosomal/lysosomal proton channel TMEM175 from Rattus norvegicus (Rat).